The chain runs to 440 residues: Ribulose bisphosphate carboxylase large chain (440 aa).

N6,N6,N6-trimethyllysine is present on Lys-4. 2 residues coordinate substrate: Asn-113 and Thr-163. Lys-165 serves as the catalytic Proton acceptor. Lys-167 contributes to the substrate binding site. The Mg(2+) site is built by Lys-191, Asp-193, and Glu-194. At Lys-191 the chain carries N6-carboxylysine. The active-site Proton acceptor is the His-284. Residues Arg-285, His-317, and Ser-369 each coordinate substrate.

It belongs to the RuBisCO large chain family. Type I subfamily. Heterohexadecamer of 8 large chains and 8 small chains; disulfide-linked. The disulfide link is formed within the large subunit homodimers. It depends on Mg(2+) as a cofactor. In terms of processing, the disulfide bond which can form in the large chain dimeric partners within the hexadecamer appears to be associated with oxidative stress and protein turnover.

It is found in the plastid. Its subcellular location is the chloroplast. It carries out the reaction 2 (2R)-3-phosphoglycerate + 2 H(+) = D-ribulose 1,5-bisphosphate + CO2 + H2O. It catalyses the reaction D-ribulose 1,5-bisphosphate + O2 = 2-phosphoglycolate + (2R)-3-phosphoglycerate + 2 H(+). Its function is as follows. RuBisCO catalyzes two reactions: the carboxylation of D-ribulose 1,5-bisphosphate, the primary event in carbon dioxide fixation, as well as the oxidative fragmentation of the pentose substrate in the photorespiration process. Both reactions occur simultaneously and in competition at the same active site. The protein is Ribulose bisphosphate carboxylase large chain of Polystichum munitum (Western sword-fern).